The primary structure comprises 490 residues: 2,3-bisphosphoglycerate-independent phosphoglycerate mutase (490 aa).

Residues D9 and S59 each coordinate Mn(2+). S59 (phosphoserine intermediate) is an active-site residue. Substrate is bound by residues H116, 145–146 (RD), R175, R181, 246–249 (RSDR), and K319. Mn(2+)-binding residues include D385, H389, D426, H427, and H444.

This sequence belongs to the BPG-independent phosphoglycerate mutase family. As to quaternary structure, monomer. It depends on Mn(2+) as a cofactor.

The enzyme catalyses (2R)-2-phosphoglycerate = (2R)-3-phosphoglycerate. It functions in the pathway carbohydrate degradation; glycolysis; pyruvate from D-glyceraldehyde 3-phosphate: step 3/5. Catalyzes the interconversion of 2-phosphoglycerate and 3-phosphoglycerate. The sequence is that of 2,3-bisphosphoglycerate-independent phosphoglycerate mutase from Helicobacter hepaticus (strain ATCC 51449 / 3B1).